A 38-amino-acid chain; its full sequence is Large ribosomal subunit protein bL36 (38 aa).

Belongs to the bacterial ribosomal protein bL36 family.

The polypeptide is Large ribosomal subunit protein bL36 (Chlorobaculum parvum (strain DSM 263 / NCIMB 8327) (Chlorobium vibrioforme subsp. thiosulfatophilum)).